Here is a 303-residue protein sequence, read N- to C-terminus: Protease HtpX homolog (303 aa).

The next 2 helical transmembrane spans lie at 4-24 (VVLFLLTNLAVIAVLSITARI) and 38-58 (MGMLLAFAALIGFGGAFISLL). H144 contributes to the Zn(2+) binding site. E145 is a catalytic residue. H148 serves as a coordination point for Zn(2+). The next 2 membrane-spanning stretches (helical) occupy residues 152-172 (GDMVTLTLIQGVVNTFVIFLS) and 199-219 (ISSIAFEIVFGVLASIVVMYF). Residue E224 participates in Zn(2+) binding.

It belongs to the peptidase M48B family. It depends on Zn(2+) as a cofactor.

The protein localises to the cell inner membrane. This chain is Protease HtpX homolog, found in Chlorobium phaeobacteroides (strain BS1).